A 359-amino-acid chain; its full sequence is Peptide chain release factor 1 (359 aa).

Q235 carries the N5-methylglutamine modification.

Belongs to the prokaryotic/mitochondrial release factor family. In terms of processing, methylated by PrmC. Methylation increases the termination efficiency of RF1.

It is found in the cytoplasm. Functionally, peptide chain release factor 1 directs the termination of translation in response to the peptide chain termination codons UAG and UAA. The sequence is that of Peptide chain release factor 1 from Polynucleobacter necessarius subsp. necessarius (strain STIR1).